Here is a 374-residue protein sequence, read N- to C-terminus: Proteinase-activated receptor 3 (374 aa).

An N-terminal signal peptide occupies residues 1-21 (MKALIFAAAGLLLLLPTFCQS). Positions 22 to 38 (GMENDTNNLAKPTLPIK) are cleaved as a propeptide — removed for receptor activation. N-linked (GlcNAc...) asparagine glycans are attached at residues asparagine 25 and asparagine 82. At 39–94 (TFRGAPPNSFEEFPFSALEGWTGATITVKIKCPEESASHLHVKNATMGYLTSSLST) the chain is on the extracellular side. A helical transmembrane segment spans residues 95–120 (KLIPAIYLLVFVVGVPANAVTLWMLF). Residues 121–128 (FRTRSICT) are Cytoplasmic-facing. A helical membrane pass occupies residues 129–148 (TVFYTNLAIADFLFCVTLPF). At 149–167 (KIAYHLNGNNWVFGEVLCR) the chain is on the extracellular side. Cysteines 166 and 245 form a disulfide. Residues 168–189 (ATTVIFYGNMYCSILLLACISI) traverse the membrane as a helical segment. The Cytoplasmic portion of the chain corresponds to 190-206 (NRYLAIVHPFTYRGLPK). The chain crosses the membrane as a helical span at residues 207–230 (HTYALVTCGLVWATVFLYMLPFFI). At 231 to 260 (LKQEYYLVQPDITTCHDVHNTCESSSPFQL) the chain is on the extracellular side. The chain crosses the membrane as a helical span at residues 261 to 280 (YYFISLAFFGFLIPFVLIIY). The Cytoplasmic segment spans residues 281–297 (CYAAIIRTLNAYDHRWL). A helical transmembrane segment spans residues 298–322 (WYVKASLLILVIFTICFAPSNIILI). The Extracellular portion of the chain corresponds to 323–336 (IHHANYYYNNTDGL). An N-linked (GlcNAc...) asparagine glycan is attached at asparagine 331. A helical membrane pass occupies residues 337–361 (YFIYLIALCLGSLNSCLDPFLYFLM). The Cytoplasmic portion of the chain corresponds to 362 to 374 (SKTRNHSTAYLTK).

This sequence belongs to the G-protein coupled receptor 1 family. Interacts with INSC/inscuteable and probably GPSM2. In terms of processing, a proteolytic cleavage generates a new N-terminus that functions as a tethered ligand. Highest expression in the megakaryocytes of the bone marrow, lower in mature megakaryocytes, in platelets and in a variety of other tissues such as heart and gut.

It is found in the cell membrane. Its function is as follows. Receptor for activated thrombin coupled to G proteins that stimulate phosphoinositide hydrolysis. The protein is Proteinase-activated receptor 3 (F2RL2) of Homo sapiens (Human).